The sequence spans 248 residues: Meiotically up-regulated gene 65 protein (248 aa).

Functionally, has a role in meiosis. This chain is Meiotically up-regulated gene 65 protein (mug65), found in Schizosaccharomyces pombe (strain 972 / ATCC 24843) (Fission yeast).